Reading from the N-terminus, the 460-residue chain is Omega-3 fatty acid desaturase, chloroplastic (460 aa).

Positions 177 to 181 (HDCGH) match the Histidine box-1 motif. The short motif at 213–217 (HRTHH) is the Histidine box-2 element. The short motif at 380 to 384 (HVIHH) is the Histidine box-3 element.

Belongs to the fatty acid desaturase type 1 family.

It localises to the plastid. Its subcellular location is the chloroplast membrane. It functions in the pathway lipid metabolism; polyunsaturated fatty acid biosynthesis. In terms of biological role, chloroplast omega-3 fatty acid desaturase introduces the third double bond in the biosynthesis of 16:3 and 18:3 fatty acids, important constituents of plant membranes. It is thought to use ferredoxin as an electron donor and to act on fatty acids esterified to galactolipids, sulfolipids and phosphatidylglycerol. This Ricinus communis (Castor bean) protein is Omega-3 fatty acid desaturase, chloroplastic (FAD7A-1).